The following is a 371-amino-acid chain: MEAVMSPMMTCVHKIMCRVDQYGNIDSYDAALNVMRKRNIQITPKESVQFKSFLRMLNMADLCFEVKEEEPCCICFRKDVIYKEVPCGHYICVECYKEPIRNVCPECNAPWPERANDPTVKQYTEEQYAHTLGGYYVTRADGTNYRSQEEYLADLDNIYREVEEADQRDNDPIESDIEEEMNESEAEEEEPVPEIAQFEALNTPPPPPTNRRPKIRRPMERARNTTRYDSEELTNMLMTEVATRVSLRGGVGDLNWITQIKNDIRKIQAASYRSRNDNMMIKYFAYLVAIIMPNECEAQRREILKLHAFRCHKRNARDCCGTCGMDMCNQRTYSIREIPNNNGSRLITVCGRCNQINNVNNTAFRLLYNYM.

The segment at 72–108 (CCICFRKDVIYKEVPCGHYICVECYKEPIRNVCPECN) adopts an RING-type zinc-finger fold. Residues 178 to 192 (EEEMNESEAEEEEPV) show a composition bias toward acidic residues. Residues 178 to 218 (EEEMNESEAEEEEPVPEIAQFEALNTPPPPPTNRRPKIRRP) form a disordered region.

In Magallana gigas (Pacific oyster), this protein is Putative RING finger protein ORF117.